The chain runs to 366 residues: Chorismate synthase (366 aa).

R48 and R54 together coordinate NADP(+). FMN contacts are provided by residues 125-127 (RSS), 237-238 (NA), G277, 292-296 (KPTSS), and R318.

The protein belongs to the chorismate synthase family. In terms of assembly, homotetramer. The cofactor is FMNH2.

The catalysed reaction is 5-O-(1-carboxyvinyl)-3-phosphoshikimate = chorismate + phosphate. It functions in the pathway metabolic intermediate biosynthesis; chorismate biosynthesis; chorismate from D-erythrose 4-phosphate and phosphoenolpyruvate: step 7/7. Functionally, catalyzes the anti-1,4-elimination of the C-3 phosphate and the C-6 proR hydrogen from 5-enolpyruvylshikimate-3-phosphate (EPSP) to yield chorismate, which is the branch point compound that serves as the starting substrate for the three terminal pathways of aromatic amino acid biosynthesis. This reaction introduces a second double bond into the aromatic ring system. This is Chorismate synthase from Acidovorax ebreus (strain TPSY) (Diaphorobacter sp. (strain TPSY)).